Here is a 302-residue protein sequence, read N- to C-terminus: Probable 2-(5''-triphosphoribosyl)-3'-dephosphocoenzyme-A synthase (302 aa).

Belongs to the CitG/MdcB family.

The catalysed reaction is 3'-dephospho-CoA + ATP = 2'-(5''-triphospho-alpha-D-ribosyl)-3'-dephospho-CoA + adenine. In Citrobacter koseri (strain ATCC BAA-895 / CDC 4225-83 / SGSC4696), this protein is Probable 2-(5''-triphosphoribosyl)-3'-dephosphocoenzyme-A synthase.